The sequence spans 34 residues: Photosystem II reaction center protein Psb30 (34 aa).

A helical membrane pass occupies residues 6–26; the sequence is VVFQLMALFFVLAAGPAVVVL.

The protein belongs to the Psb30/Ycf12 family. In terms of assembly, PSII is composed of 1 copy each of membrane proteins PsbA, PsbB, PsbC, PsbD, PsbE, PsbF, PsbH, PsbI, PsbJ, PsbK, PsbL, PsbM, PsbT, PsbX, PsbY, PsbZ, Psb30/Ycf12, peripheral proteins of the oxygen-evolving complex and a large number of cofactors. It forms dimeric complexes.

It is found in the plastid. The protein resides in the chloroplast thylakoid membrane. In terms of biological role, a core subunit of photosystem II (PSII), probably helps stabilize the reaction center. This is Photosystem II reaction center protein Psb30 from Stigeoclonium helveticum (Green alga).